The chain runs to 64 residues: MARKDQISHRGPLSGNNRSHALNATKRKFNLNLQQITLKTASGKKIRLKVSAKTKKTLRKWGHV.

Residues 1–23 (MARKDQISHRGPLSGNNRSHALN) form a disordered region.

The protein belongs to the bacterial ribosomal protein bL28 family.

In Mesomycoplasma hyopneumoniae (strain J / ATCC 25934 / NCTC 10110) (Mycoplasma hyopneumoniae), this protein is Large ribosomal subunit protein bL28.